We begin with the raw amino-acid sequence, 297 residues long: 33 kDa chaperonin (297 aa).

2 disulfide bridges follow: Cys232–Cys234 and Cys266–Cys269.

This sequence belongs to the HSP33 family. Under oxidizing conditions two disulfide bonds are formed involving the reactive cysteines. Under reducing conditions zinc is bound to the reactive cysteines and the protein is inactive.

Its subcellular location is the cytoplasm. Functionally, redox regulated molecular chaperone. Protects both thermally unfolding and oxidatively damaged proteins from irreversible aggregation. Plays an important role in the bacterial defense system toward oxidative stress. The chain is 33 kDa chaperonin from Pseudomonas aeruginosa (strain LESB58).